A 207-amino-acid chain; its full sequence is Gene 66 protein (207 aa).

This Mycobacterium (Mycobacteriophage L5) protein is Gene 66 protein (66).